The sequence spans 65 residues: Defensin Cg-Defm (65 aa).

A signal peptide spans 1–22; it reads MKVFVLLTLAVLLMVSADMAFA. Beta-D-GlcNAc-(1-&gt;4)-Mur2Ac(oyl-L-Ala-gamma-D-Glu-L-Lys-D-Ala-D-Ala)-di-trans,octa-cis-undecaprenyl diphosphate contacts are provided by Phe-24, Gly-25, and Cys-26. Intrachain disulfides connect Cys-26–Cys-47, Cys-33–Cys-56, Cys-37–Cys-58, and Cys-42–Cys-61. Positions 27 to 30 are binds to membrane interface; that stretch reads PGNQ. Residue His-36 participates in beta-D-GlcNAc-(1-&gt;4)-Mur2Ac(oyl-L-Ala-gamma-D-Glu-L-Lys-D-Ala-D-Ala)-di-trans,octa-cis-undecaprenyl diphosphate binding. Residues 48 to 54 are binds to membrane interface; the sequence is DAATLWL. Cys-56 is a beta-D-GlcNAc-(1-&gt;4)-Mur2Ac(oyl-L-Ala-gamma-D-Glu-L-Lys-D-Ala-D-Ala)-di-trans,octa-cis-undecaprenyl diphosphate binding site.

Belongs to the invertebrate defensin family. Expressed in the mantle. Low or no expression in most of the organs analyzed, including hemocytes, heart, digestive gland, and gills.

The protein localises to the secreted. It is found in the target cell membrane. Antibacterial peptide mostly active against Gram-positive bacteria (M.lysodeikticus, S.aureus, and the marine bacteria, B.stationis, and M.maritypicum). It acts by selectively inhibiting peptidoglycan biosynthesis through complex formation with the cell wall precursor lipid II (1:1 molar ratio) thus inhibiting cell wall synthesis. It does not disrupt cell membranes. Is noticeably more potent than Cg-Defh1. It shows no or limited activities against Gram-negative bacteria and filamentous fungi. In Magallana gigas (Pacific oyster), this protein is Defensin Cg-Defm.